The following is a 444-amino-acid chain: D(2) dopamine receptor (444 aa).

The Extracellular segment spans residues 1–37 (MDPLNLSWYDDDLERQNWSRPFNGSEGKADRPHYNYY). N-linked (GlcNAc...) asparagine glycosylation is found at Asn-5, Asn-17, and Asn-23. Residues 38-60 (AMLLTLLIFIIVFGNVLVCMAVS) traverse the membrane as a helical segment. Over 61 to 70 (REKALQTTTN) the chain is Cytoplasmic. The helical transmembrane segment at 71-93 (YLIVSLAVADLLVATLVMPWVVY) threads the bilayer. At 94 to 108 (LEVVGEWKFSRIHCD) the chain is on the extracellular side. A disulfide bond links Cys-107 and Cys-182. Residues 109–130 (IFVTLDVMMCTASILNLCAISI) traverse the membrane as a helical segment. The Cytoplasmic segment spans residues 131–151 (DRYTAVAMPMLYNTRYSSKRR). Residues 152–172 (VTVMIAIVWVLSFTISCPLLF) traverse the membrane as a helical segment. The Extracellular portion of the chain corresponds to 173–188 (GLNNTDQNECIIANPA). A helical membrane pass occupies residues 189–213 (FVVYSSIVSFYVPFIVTLLVYIKIY). The tract at residues 211–374 (KIYIVLRKRR…SQQKEKKATQ (164 aa)) is interaction with PPP1R9B. The Cytoplasmic portion of the chain corresponds to 214–374 (IVLRKRRKRV…SQQKEKKATQ (161 aa)). The disordered stretch occupies residues 282-329 (EMLSSTSPPERTRYSPIPPSHHQLTLPDPSHHGLHSNPDSPAKPEKNG). Residues 375 to 396 (MLAIVLGVFIICWLPFFITHIL) traverse the membrane as a helical segment. Topologically, residues 397–410 (NIHCDCNIPPVLYS) are extracellular. Cys-400 and Cys-402 are joined by a disulfide. The chain crosses the membrane as a helical span at residues 411–432 (AFTWLGYVNSAVNPIIYTTFNI). The Cytoplasmic segment spans residues 433-444 (EFRKAFMKILHC). Cys-444 is lipidated: S-palmitoyl cysteine.

Belongs to the G-protein coupled receptor 1 family. As to quaternary structure, forms homo- and heterooligomers with DRD4. The interaction with DRD4 may modulate agonist-induced downstream signaling. Interacts with CADPS and CADPS2. Interacts with GPRASP1, PPP1R9B and CLIC6. Interacts with ARRB2. Interacts with HTR2A. Interacts with DRD1. Interacts with KCNA2. Palmitoylated. Palmitoylation which is required for proper localization to the plasma membrane and stability of the receptor could be carried on by ZDHHC4, ZDHHC3 and ZDHHC8. In terms of tissue distribution, expressed in the anterior lobe of the pituitary gland. Expressed ventral tegmental area of the midbrain and the pars compacta of the substantia nigra. Expressed seven times more than isoform short in the caudate nucleus. Expressed in the anterior lobe of the pituitary gland. Expressed in the caudate nucleus. Not expressed in the wider brain.

It is found in the cell membrane. It localises to the golgi apparatus membrane. Dopamine receptor whose activity is mediated by G proteins which inhibit adenylyl cyclase. Positively regulates postnatal regression of retinal hyaloid vessels via suppression of VEGFR2/KDR activity, downstream of OPN5. The sequence is that of D(2) dopamine receptor (Drd2) from Rattus norvegicus (Rat).